We begin with the raw amino-acid sequence, 241 residues long: Probable 2-phosphosulfolactate phosphatase (241 aa).

The protein belongs to the ComB family. Requires Mg(2+) as cofactor.

It catalyses the reaction (2R)-O-phospho-3-sulfolactate + H2O = (2R)-3-sulfolactate + phosphate. The polypeptide is Probable 2-phosphosulfolactate phosphatase (Microcystis aeruginosa (strain NIES-843 / IAM M-2473)).